Here is a 321-residue protein sequence, read N- to C-terminus: Quinol oxidase subunit 2 (321 aa).

Residues methionine 1–glycine 25 form the signal peptide. Cysteine 26 carries N-palmitoyl cysteine lipidation. Cysteine 26 carries S-diacylglycerol cysteine lipidation. Transmembrane regions (helical) follow at residues serine 49 to valine 69 and threonine 90 to proline 110. The interval glutamine 294–glutamate 321 is disordered. Positions serine 300 to glutamate 321 are enriched in basic and acidic residues.

This sequence belongs to the cytochrome c oxidase subunit 2 family. As to quaternary structure, interacts with FloT.

Its subcellular location is the cell membrane. It is found in the membrane raft. The enzyme catalyses 2 a quinol + O2 = 2 a quinone + 2 H2O. Its function is as follows. Catalyzes quinol oxidation with the concomitant reduction of oxygen to water. Major component for energy conversion during vegetative growth. Subunit II transfers the electrons from a quinol to the binuclear center of the catalytic subunit I. The sequence is that of Quinol oxidase subunit 2 (qoxA) from Bacillus subtilis (strain 168).